A 385-amino-acid chain; its full sequence is Homoserine O-succinyltransferase (385 aa).

Positions 45-355 (NAVLVCHALN…PHGHDAFLLD (311 aa)) constitute an AB hydrolase-1 domain. The active-site Nucleophile is the Ser-151. Position 221 (Arg-221) interacts with substrate. Active-site residues include Asp-316 and His-349. Asp-350 is a substrate binding site.

The protein belongs to the AB hydrolase superfamily. MetX family. In terms of assembly, homodimer.

The protein resides in the cytoplasm. It catalyses the reaction L-homoserine + succinyl-CoA = O-succinyl-L-homoserine + CoA. It functions in the pathway amino-acid biosynthesis; L-methionine biosynthesis via de novo pathway; O-succinyl-L-homoserine from L-homoserine: step 1/1. In terms of biological role, transfers a succinyl group from succinyl-CoA to L-homoserine, forming succinyl-L-homoserine. The chain is Homoserine O-succinyltransferase from Janthinobacterium sp. (strain Marseille) (Minibacterium massiliensis).